The following is a 236-amino-acid chain: uncharacterized protein (236 aa).

The signal sequence occupies residues 1-22 (MEFKMQKIILGMLVVTASNAMA).

This is an uncharacterized protein from Pasteurella multocida (strain Pm70).